The primary structure comprises 69 residues: Cap-specific mRNA (nucleoside-2'-O-)-methyltransferase (69 aa).

MRNA is bound at residue Tyr-22. S-adenosyl-L-methionine contacts are provided by Gln-39, Tyr-66, and Gly-68.

Belongs to the class I-like SAM-binding methyltransferase superfamily. Poxvirus/kinetoplastid 2'-O-MTase family. As to quaternary structure, interacts with poly(A) polymerase catalytic subunit OPG063. Interacts with OPG109 and OPG123; these interactions might help linking transcription to capping and polyadenylation.

It localises to the virion. The catalysed reaction is a 5'-end (N(7)-methyl 5'-triphosphoguanosine)-ribonucleoside in mRNA + S-adenosyl-L-methionine = a 5'-end (N(7)-methyl 5'-triphosphoguanosine)-(2'-O-methyl-ribonucleoside) in mRNA + S-adenosyl-L-homocysteine + H(+). In terms of biological role, displays methyltransferase, positive regulation of the poly(A) polymerase and transcription elongation activities. Involved in the modification of both mRNA ends and in intermediate and late gene positive transcription elongation. At the mRNAs 5' end, methylates the ribose 2' OH group of the first transcribed nucleotide, thereby producing a 2'-O-methylpurine cap. At the 3' end, functions as a processivity factor which stimulates the activity of the viral poly(A) polymerase OPG063 that creates mRNA's poly(A) tail. In the presence of OPG102, OPG063 does not dissociate from the RNA allowing tail elongation to around 250 adenylates. The polypeptide is Cap-specific mRNA (nucleoside-2'-O-)-methyltransferase (OPG102) (Sus scrofa (Pig)).